Consider the following 111-residue polypeptide: MMQTSTSSRVRRYPYQITLSLVLKGFYSPSAPSYDFCLVLLPTLFLIDLMPIKFSLHVTIGIGEATPVPIFFFSAPWYFRSGNPLPHCVRAYRCKVNFPFFRLGWSTWLHY.

This is an uncharacterized protein from Saccharomyces cerevisiae (strain ATCC 204508 / S288c) (Baker's yeast).